Consider the following 94-residue polypeptide: MQQEALGMVETKGLTAAIEAADAMVKSANVMLVGYEKIGSGLVTVIVRGDVGAVKAATDAGAAAARNVGEVKAVHVIPRPHTDVEKILPKGISQ.

In terms of domain architecture, BMC spans 5-89 (ALGMVETKGL…PHTDVEKILP (85 aa)).

This sequence belongs to the bacterial microcompartments protein family. In terms of assembly, homohexamer with a central pore of about 5.6 Angstroms in diameter. The hexamers pack against each other in arrays. Interacts with the N-terminus of PduP which targets PduP to the BMC. Modeling suggests PduC, PduD, PduE, PduL and PduP interact with a cleft formed by the C-terminal segments of 2 adjacent PduA subunits (on the BMC luminal side) in the hexamer.

It is found in the bacterial microcompartment. It participates in polyol metabolism; 1,2-propanediol degradation. In terms of biological role, one of the major shell proteins of the bacterial microcompartment (BMC) dedicated to 1,2-propanediol (1,2-PD) degradation. At least one of PduA or PduJ is required for BMC assembly; it must be encoded as the first gene in the pdu operon. Not required for structural integrity of BMCs, it is required to mitigate propionaldehyde toxicity. Controls diffusion of 1,2-PD into and propionaldehyde out of the BMC shell; residue 40 is particularly important for pore permeability. Overexpression of this protein leads to aberrant filaments that extend the length of the cell, cross the cleavage furrow and impair division. The filaments form nanotubes with a hollow center. The isolated BMC shell component protein ratio for J:A:B':B:K:T:U is approximately 15:10:7:6:1:1:2. Edge residues (particularly Lys-26) are important for function and assembly of the BMC, and influence array formation by hexamers. Interaction with PduA allows encapsulation of at least PduP in BMCs. Probably also targets PduD to the BMC. PduA is probably the hub for binding multiple enzymes to the interior of the BMC; modeling suggests PduC, PduD, PduE, PduG, PduL and PduP are targeted to PduA. The 1,2-PD-specific bacterial microcompartment (BMC) concentrates low levels of 1,2-PD catabolic enzymes, concentrates volatile reaction intermediates thus enhancing pathway flux and keeps the level of toxic, mutagenic propionaldehyde low. In Salmonella typhimurium (strain LT2 / SGSC1412 / ATCC 700720), this protein is Bacterial microcompartment shell protein PduA.